The chain runs to 2422 residues: Interferon-induced very large GTPase 1 (2422 aa).

A disordered region spans residues 945–965; sequence ENFFEDSDSPTKSSSTEPSPH. Over residues 954 to 963 the composition is skewed to low complexity; that stretch reads PTKSSSTEPS. One can recognise a VLIG-type G domain in the interval 1479–1720; the sequence is DKRLFVLSIL…KISDVKSRVQ (242 aa). Residues 1489 to 1496, 1542 to 1545, and 1619 to 1622 each bind GTP; these read GLQSSGKS, DTEG, and TATD.

The protein belongs to the TRAFAC class dynamin-like GTPase superfamily. Very large inducible GTPase (VLIG) family.

It localises to the cytoplasm. The protein resides in the cytosol. The protein localises to the nucleus. The protein is Interferon-induced very large GTPase 1 (GVINP1) of Homo sapiens (Human).